We begin with the raw amino-acid sequence, 435 residues long: DMATS-type prenyltransferase fscG (435 aa).

Positions 111, 193, 195, 259, 261, 263, 352, and 423 each coordinate dimethylallyl diphosphate.

The protein belongs to the tryptophan dimethylallyltransferase family.

It functions in the pathway secondary metabolite biosynthesis. Its function is as follows. DMATS-type prenyltransferase; part of the fragmented gene cluster that mediates the biosynthesis of fusarochromene, a tryptophan-derived metabolite closely related to a group of mycotoxins including fusarochromanone. Within the pathway, fscG catalyzes the prenylation of the primary alcohol produced by fscA which is necessary for the formation of the chromene ring by the oxidoreductase fscI. The first step of the pathway is the epimerization of L-tryptophan to D-tryptophan in the presence of the NRPS-like tryptophan epimerase fscC. D-tryptophan is subsequently hydroxylated by the tryptophan 6-hydroxylase fscE to yield 6-hydroxytryptophan. The pyrrole ring undergoes cleavaged by the tryptophan 2,3-dioxygenase fscD and is finally converted to 4-hydroxykyrunenine by the hydrolase fscH. The NRPS-like oxidoreductase fscA reduces the carboxyl group to primary alcohol and the DMATS-type prenyltransferase fscG performs prenylation, followed by the formation of a chromene ring catalyzed by the oxidoreductase fscI, which leads to desacetylfusarochromene. Epoxidation by fscF and rearrangement reactions of chromene double bonds convert compound desacetylfusarochromene to fusarochromanones. Although specific acetyltransferases were not found near the fsc gene cluster, several predicted enzymes containing the N-acetyltransferase superfamily domain are present in the genome of F.equiseti. These predicted enzymes may have the potential to convert desacetylfusarochromene to fusarochromene. The chain is DMATS-type prenyltransferase fscG from Fusarium equiseti (Fusarium scirpi).